Here is a 205-residue protein sequence, read N- to C-terminus: Adenylyl-sulfate kinase (205 aa).

An ATP-binding site is contributed by Gly-31–Ser-38. Ser-105 (phosphoserine intermediate) is an active-site residue.

This sequence belongs to the APS kinase family.

It catalyses the reaction adenosine 5'-phosphosulfate + ATP = 3'-phosphoadenylyl sulfate + ADP + H(+). It functions in the pathway sulfur metabolism; hydrogen sulfide biosynthesis; sulfite from sulfate: step 2/3. Catalyzes the synthesis of activated sulfate. In Shewanella putrefaciens (strain CN-32 / ATCC BAA-453), this protein is Adenylyl-sulfate kinase.